Consider the following 88-residue polypeptide: Translation initiation factor IF-1 3 (88 aa).

Residues 1–72 form the S1-like domain; it reads MAKEELLELD…TKGCINFRHK (72 aa).

This sequence belongs to the IF-1 family. In terms of assembly, component of the 30S ribosomal translation pre-initiation complex which assembles on the 30S ribosome in the order IF-2 and IF-3, IF-1 and N-formylmethionyl-tRNA(fMet); mRNA recruitment can occur at any time during PIC assembly.

The protein localises to the cytoplasm. Functionally, one of the essential components for the initiation of protein synthesis. Stabilizes the binding of IF-2 and IF-3 on the 30S subunit to which N-formylmethionyl-tRNA(fMet) subsequently binds. Helps modulate mRNA selection, yielding the 30S pre-initiation complex (PIC). Upon addition of the 50S ribosomal subunit IF-1, IF-2 and IF-3 are released leaving the mature 70S translation initiation complex. The chain is Translation initiation factor IF-1 3 from Burkholderia orbicola (strain AU 1054).